The chain runs to 342 residues: Ribosomal RNA small subunit methyltransferase C (342 aa).

Belongs to the methyltransferase superfamily. RsmC family. Monomer.

It is found in the cytoplasm. It catalyses the reaction guanosine(1207) in 16S rRNA + S-adenosyl-L-methionine = N(2)-methylguanosine(1207) in 16S rRNA + S-adenosyl-L-homocysteine + H(+). Functionally, specifically methylates the guanine in position 1207 of 16S rRNA in the 30S particle. This is Ribosomal RNA small subunit methyltransferase C from Erwinia tasmaniensis (strain DSM 17950 / CFBP 7177 / CIP 109463 / NCPPB 4357 / Et1/99).